The chain runs to 656 residues: MESPFSPVLPHGPDEDWESTLFAELGYFTDTDDVHFDAAHEAYENNFDHLNFDLDLMPWESDLWSPGSHFCSDMKAEPQPLSPASSSCSISSPRSTDSCSSTQHVPEELDLLSSSQSPLSLYGDSCNSPSSVEPLKEEKPVTGPGNKTEHGLTPKKKIQMSSKPSVQPKPLLLPAAPKTQTNASVPAKAIIIQTLPALMPLAKQQSIISIQPAPTKGQTVLLSQPTVVQLQSPAVLSSAQPVLAVTGGAAQLPNHVVNVLPAPVVSSPVNGKLSVTKPVLQSATRSMGSDIAVLRRQQRMIKNRESACQSRKKKKEYMLGLEARLKAALSENEQLKKENGSLKRQLDEVVSENQRLKVPSPKRRAVCVMIVLAFIMLNYGPMSMLEQESRRVKPSVSPANQRRHLLEFSAKEVKDTSDGDNQKDSYSYDHSVSNDKALMVLSEEPLLYMPPPPCQPLINTTESLRLNHELRGWVHRHEVERTKSRRMTNSQQKARILQGALEQGSNSQLMAVQYTETTSISRNSGSELQVYYASPGSYQGFFDAIRRRGDTFYVVSFRRDHLLLPATTHNKTTRPKMSIVLPAININDNVINGQDYEVMMQIDCQVMDTRILHIKSSSVPPYLRDHQRNQTSTFFGSPPTTTETTHVVSTIPESLQ.

A transcription activation region spans residues 1 to 137; it reads MESPFSPVLP…SPSSVEPLKE (137 aa). At 1–377 the chain is on the cytoplasmic side; that stretch reads MESPFSPVLP…VMIVLAFIML (377 aa). Residue K75 forms a Glycyl lysine isopeptide (Lys-Gly) (interchain with G-Cter in SUMO2) linkage. A disordered region spans residues 75-169; it reads KAEPQPLSPA…MSSKPSVQPK (95 aa). 2 stretches are compositionally biased toward low complexity: residues 78 to 101 and 111 to 121; these read PQPLSPASSSCSISSPRSTDSCSS and LLSSSQSPLSL. K139 participates in a covalent cross-link: Glycyl lysine isopeptide (Lys-Gly) (interchain with G-Cter in ubiquitin). One can recognise a bZIP domain in the interval 293–356; that stretch reads VLRRQQRMIK…DEVVSENQRL (64 aa). Residues 295 to 326 are basic motif; that stretch reads RRQQRMIKNRESACQSRKKKKEYMLGLEARLK. The segment at 335–342 is leucine-zipper; the sequence is LKKENGSL. Residues 378 to 398 form a helical; Signal-anchor for type II membrane protein membrane-spanning segment; the sequence is NYGPMSMLEQESRRVKPSVSP. The tract at residues 391–429 is disordered; that stretch reads RVKPSVSPANQRRHLLEFSAKEVKDTSDGDNQKDSYSYD. Topologically, residues 399-656 are lumenal; it reads ANQRRHLLEF…VVSTIPESLQ (258 aa). Residues 404–427 show a composition bias toward basic and acidic residues; that stretch reads HLLEFSAKEVKDTSDGDNQKDSYS. The tract at residues 455–575 is interaction with THBS4; the sequence is QPLINTTESL…ATTHNKTTRP (121 aa). N-linked (GlcNAc...) asparagine glycosylation is found at N459, N570, and N629. The span at 632–650 shows a compositional bias: low complexity; it reads STFFGSPPTTTETTHVVST. The disordered stretch occupies residues 632-656; that stretch reads STFFGSPPTTTETTHVVSTIPESLQ.

This sequence belongs to the bZIP family. ATF subfamily. In terms of assembly, interacts with XBP1 isoform 2; the interaction occurs in a ER stress-dependent manner. Interacts with LACC1. As to quaternary structure, interacts with THBS4 (via EGF-like 3; calcium-binding domain) which facilitates its processing, activation and nuclear translocation. Interacts (via lumenal domain) with THBS1. Homodimer and heterodimer with ATF6-beta. The dimer interacts with the nuclear transcription factor Y (NF-Y) trimer through direct binding to NF-Y subunit C (NF-YC). Also interacts with the transcription factors GTF2I, YY1 and SRF. During unfolded protein response, a fragment of approximately 50 kDa containing the cytoplasmic transcription factor domain is released by proteolysis. The cleavage seems to be performed sequentially by site-1 (MBTPS1, S1P) and site-2 (MBTPS2, S2P) proteases. Post-translationally, N-glycosylated; in its luminal domain. The glycosylation status may serve as a sensor for ER homeostasis, resulting in ATF6 activation to trigger the unfolded protein response (UPR). In terms of processing, ubiquitinated by RNF186 at Lys-139, which is required for pattern recognition receptor-induced unfolded protein response-associated outcomes.

Its subcellular location is the endoplasmic reticulum membrane. The protein localises to the golgi apparatus membrane. The protein resides in the nucleus. In terms of biological role, precursor of the transcription factor form (Processed cyclic AMP-dependent transcription factor ATF-6 alpha), which is embedded in the endoplasmic reticulum membrane. Endoplasmic reticulum stress promotes processing of this form, releasing the transcription factor form that translocates into the nucleus, where it activates transcription of genes involved in the unfolded protein response (UPR). Functionally, transcription factor that initiates the unfolded protein response (UPR) during endoplasmic reticulum stress by activating transcription of genes involved in the UPR. Binds DNA on the 5'-CCAC[GA]-3'half of the ER stress response element (ERSE) (5'-CCAAT-N(9)-CCAC[GA]-3') and of ERSE II (5'-ATTGG-N-CCACG-3'). Binding to ERSE requires binding of NF-Y to ERSE. Could also be involved in activation of transcription by the serum response factor. May play a role in foveal development and cone function in the retina. The sequence is that of Cyclic AMP-dependent transcription factor ATF-6 alpha (Atf6) from Mus musculus (Mouse).